Consider the following 674-residue polypeptide: MPPPAEEFAVDDLDEFESRLDSFLNRFHADDLRRILLPFPDGKLHFPLVIDFAELLEFDPEVAHQLYDYPKDVLELFDAAAQRALDKFDAAARRADKRKAGDETMEKKFVHVRVNTSGSALECPEASPSIGKVRVKHRGTLLTLKGTVIRSGGVKMIEGERKYQCRKCKCRFTVHPELEAGNRITLPASCKSKSAKGCGGANFQLIEDSITCHDYQEIKIQENIQLLGVGSIPRSMPIILMDDLVDIVKAGDDVVVTGRLSAKWSPDIKDVRSNLDPMLIANFVRRTNELKSDLDIPVEIINKFEEFWAASRATPLKGRNSILKGICPQIYGLFTVKLAVALTLIGGVQHVDASGTKVRGEPHMLLVGDPGTGKSQFLKFAAKLSNRSVITTGLGSTSAGLTVTAVKDGGEWMLEAGALVLADGGLCCIDEFDSMREHDRTTIHEAMEQQTISIAKAGLVTTLNTRTTVFGATNPKGQYDPNESLSVNTTLSGPLLSRFDIVLVLLDTKNKKWDKIVSSHILAENTEEKKGKTSDPEVMWTLSMLRRYIHYVKQHFKPVLTKEAERVISSYYQRQRQSGTRNAARTTVRMLESLIRLAQAHARLMFRNDVTKLDAIAAILCIESSMTTSAIVDTAGNALHSNFTENPDQECILKCDSIAYLSKNIKYLTDEISN.

The segment at 165-198 (CRKCKCRFTVHPELEAGNRITLPASCKSKSAKGC) adopts a C4-type zinc-finger fold. The MCM domain occupies 318 to 521 (GRNSILKGIC…KWDKIVSSHI (204 aa)). Position 368–375 (368–375 (GDPGTGKS)) interacts with ATP. The Arginine finger motif lies at 497–500 (SRFD).

It belongs to the MCM family.

It is found in the nucleus. The catalysed reaction is ATP + H2O = ADP + phosphate + H(+). Its function is as follows. Probable DNA helicase that may play a role in DNA repair during meiosis. The sequence is that of Probable DNA helicase MCM9 (MCM9) from Oryza sativa subsp. japonica (Rice).